Reading from the N-terminus, the 793-residue chain is Spindle and centriole-associated protein 1 (793 aa).

The segment at 1 to 29 (MSYLRASRTSSNLSLAKKPSKTRKKLQAR) is disordered. Basic residues predominate over residues 18-27 (KPSKTRKKLQ). Residues 312–405 (SLGLLNSMIM…LTAEILSLKE (94 aa)) are a coiled coil. A disordered region spans residues 519 to 542 (KTVGNLSSHSAVPKRAANRLPSPP). A coiled-coil region spans residues 622 to 712 (LQNEDLVSQM…LLKLIEQQKQ (91 aa)). The segment covering 718–739 (PTLSPITPQGRRTGSSLDTTPL) has biased composition (polar residues). Positions 718-783 (PTLSPITPQG…RSQAANDRGE (66 aa)) are disordered. The segment covering 740-753 (SSCSTSGRRSSGAS) has biased composition (low complexity). Residues 754–778 (NKSESISTSVGSLRSASTGRRSQAA) show a composition bias toward polar residues.

The protein localises to the cytoplasm. It is found in the cytoskeleton. Its subcellular location is the microtubule organizing center. It localises to the centrosome. The protein resides in the centriole. The protein localises to the spindle. Its function is as follows. Regulator required for centriole duplication. In Xenopus laevis (African clawed frog), this protein is Spindle and centriole-associated protein 1 (spice1).